The following is a 51-amino-acid chain: Large ribosomal subunit protein eL39 (51 aa).

It belongs to the eukaryotic ribosomal protein eL39 family.

The protein is Large ribosomal subunit protein eL39 of Methanopyrus kandleri (strain AV19 / DSM 6324 / JCM 9639 / NBRC 100938).